Reading from the N-terminus, the 227-residue chain is Fibrillarin-like rRNA/tRNA 2'-O-methyltransferase (227 aa).

S-adenosyl-L-methionine is bound by residues 82 to 83, 100 to 101, 125 to 126, and 145 to 148; these read TT, EF, DA, and DVAQ.

This sequence belongs to the methyltransferase superfamily. Fibrillarin family. As to quaternary structure, interacts with nop5. Component of box C/D small ribonucleoprotein (sRNP) particles that contain rpl7ae, FlpA and nop5, plus a guide RNA.

In terms of biological role, involved in pre-rRNA and tRNA processing. Utilizes the methyl donor S-adenosyl-L-methionine to catalyze the site-specific 2'-hydroxyl methylation of ribose moieties in rRNA and tRNA. Site specificity is provided by a guide RNA that base pairs with the substrate. Methylation occurs at a characteristic distance from the sequence involved in base pairing with the guide RNA. The polypeptide is Fibrillarin-like rRNA/tRNA 2'-O-methyltransferase (Methanosarcina mazei (strain ATCC BAA-159 / DSM 3647 / Goe1 / Go1 / JCM 11833 / OCM 88) (Methanosarcina frisia)).